We begin with the raw amino-acid sequence, 338 residues long: Phenylalanine--tRNA ligase alpha subunit (338 aa).

Residue E253 coordinates Mg(2+).

Belongs to the class-II aminoacyl-tRNA synthetase family. Phe-tRNA synthetase alpha subunit type 1 subfamily. As to quaternary structure, tetramer of two alpha and two beta subunits. The cofactor is Mg(2+).

It localises to the cytoplasm. The enzyme catalyses tRNA(Phe) + L-phenylalanine + ATP = L-phenylalanyl-tRNA(Phe) + AMP + diphosphate + H(+). This is Phenylalanine--tRNA ligase alpha subunit from Gloeobacter violaceus (strain ATCC 29082 / PCC 7421).